Reading from the N-terminus, the 239-residue chain is MLYDFASWYRRWRFGEGKRIDLVLIGPPGSGKGTQAVKIAERYNICHLSTGDILRAIIASGSELGQKVQKITESGGLVSDDIVCDLIAQKINSPECKNGLLFDGFPRTIEQAKKLDNLLRDRQIHLLAALEFKLDPSILEKRICGRLFHLASGRSYHELFNPPKVPMVDDITGDRLVHRSDDKPEALKKRLYEYDKNVAPILHFYESQNKLLRINANKDVNQVFSDIQELVRTKLAEEK.

29–34 lines the ATP pocket; it reads GSGKGT. Residues 49–78 are NMP; the sequence is STGDILRAIIASGSELGQKVQKITESGGLV. Residues threonine 50, arginine 55, 76–78, 104–107, and glutamine 111 each bind AMP; these read GLV and GFPR. The interval 145–182 is LID; it reads GRLFHLASGRSYHELFNPPKVPMVDDITGDRLVHRSDD. Residues arginine 146 and 155-156 each bind ATP; that span reads SY. Positions 179 and 190 each coordinate AMP.

The protein belongs to the adenylate kinase family. AK2 subfamily. Monomer. The cofactor is Mg(2+).

It localises to the cytoplasm. The protein resides in the cytosol. It carries out the reaction AMP + ATP = 2 ADP. The protein operates within purine metabolism; purine nucleotide biosynthesis. Catalyzes the reversible transfer of the terminal phosphate group between ATP and AMP. Plays an important role in cellular energy homeostasis and in adenine nucleotide metabolism. This chain is Adenylate kinase 2, found in Schistosoma mansoni (Blood fluke).